The chain runs to 998 residues: Type II restriction enzyme and methyltransferase RM.Eco57I (998 aa).

It in the C-terminal section; belongs to the N(4)/N(6)-methyltransferase family. Monomer.

The enzyme catalyses Endonucleolytic cleavage of DNA to give specific double-stranded fragments with terminal 5'-phosphates.. It catalyses the reaction a 2'-deoxyadenosine in DNA + S-adenosyl-L-methionine = an N(6)-methyl-2'-deoxyadenosine in DNA + S-adenosyl-L-homocysteine + H(+). With respect to regulation, mg(2+) is absolutely required for DNA restriction. In terms of biological role, an E, G and S subtype restriction enzyme that recognizes the (non-palindromic) double-stranded sequence 5'-CTGAAG-3' and cleaves respectively 22 bases after C-1 and 14 bases before C'-1; cleavage of lambda DNA is never complete. Also acts as a methylase that causes specific methylation on A-5 in 5'-CTGAAG-3', the other strand is methylated by the M.Eco57I methylase. This is Type II restriction enzyme and methyltransferase RM.Eco57I from Escherichia coli.